Here is a 76-residue protein sequence, read N- to C-terminus: Dermaseptin-SP2 (76 aa).

Positions 1–22 (MAFLKKSLFLVLFLGLVSLSIC) are cleaved as a signal peptide. Residues 23-45 (EEEKRENEDEEEQEDEEQSEEKR) constitute a propeptide that is removed on maturation. The segment at 24–44 (EEKRENEDEEEQEDEEQSEEK) is disordered. Residues 30–41 (EDEEEQEDEEQS) show a composition bias toward acidic residues. Residue Gln73 is modified to Glutamine amide. The propeptide occupies 74-76 (GEQ).

As to expression, expressed by the skin glands.

Its subcellular location is the secreted. It is found in the target cell membrane. Its function is as follows. Antimicrobial peptide with activity against Gram-positive and Gram-negative bacteria and fungi. Has been tested against E.coli (MIC=2.68-8 uM), S.aureus (ATCC 25923, MIC=2.68-8 uM), S.aureus (ATCC oxacillin resistant, MIC=2.68 uM), K.pneumoniae (MIC=10.71 uM) and C.albicans (MIC=10.71-32 uM). Probably acts by disturbing membrane functions with its alpha-helical amphipathic structure. May penetrate bacterial membranes, but stay at the mammalian membrane surface. Shows a very weak hemolytic activity. The chain is Dermaseptin-SP2 from Agalychnis spurrelli (Gliding leaf frog).